We begin with the raw amino-acid sequence, 139 residues long: Large ribosomal subunit protein uL16 (139 aa).

It belongs to the universal ribosomal protein uL16 family. Part of the 50S ribosomal subunit.

In terms of biological role, binds 23S rRNA and is also seen to make contacts with the A and possibly P site tRNAs. This chain is Large ribosomal subunit protein uL16, found in Chlorobium chlorochromatii (strain CaD3).